A 341-amino-acid chain; its full sequence is MGNIQMSTISIAVDAMGGDFAPEAVVGGLNFALMNLLVDHNISFNIYGKEDCVLPVLDKYKTVRDNSVFINTSDVVLANDKPSFALRKRKSSSMWCAIDSIKTGTSSGVVSCGNTGALMAISRFVLGTLPNIDRPAICTKVPSKFQDFVLLDLGANIECSANSLFQFAIMGGAFAKAVLNIPNPKVALLNVGQEEIKGTGVIREAFSLLKEVEGKINFCGYVEPKDMVDGKVDVVVTDGFCGNVVLKVSESIASTIASIFKESISESIVAKFAGLLLKPRLIKNFSKFNPKLHNGAMFLGLNGVVVKSHGNSDELAFANAVKVVVNAVIHDINAKIVHELN.

This sequence belongs to the PlsX family. In terms of assembly, homodimer. Probably interacts with PlsY.

It localises to the cytoplasm. The catalysed reaction is a fatty acyl-[ACP] + phosphate = an acyl phosphate + holo-[ACP]. Its pathway is lipid metabolism; phospholipid metabolism. Catalyzes the reversible formation of acyl-phosphate (acyl-PO(4)) from acyl-[acyl-carrier-protein] (acyl-ACP). This enzyme utilizes acyl-ACP as fatty acyl donor, but not acyl-CoA. This is Phosphate acyltransferase from Ehrlichia ruminantium (strain Gardel).